The sequence spans 354 residues: Thiamine thiazole synthase 1, chloroplastic (354 aa).

The transit peptide at 1 to 43 (MATTAASSLLKSSFAGSRLPSATRAPSSVVVSTGGAPRTAAIS) directs the protein to the chloroplast. Substrate contacts are provided by residues A96, 116–117 (EQ), G124, and V190. C219 carries the 2,3-didehydroalanine (Cys) modification. Residues D221, H236, M288, and 298–300 (RMG) each bind substrate.

This sequence belongs to the THI4 family. Homooctamer. Fe cation is required as a cofactor. In terms of processing, during the catalytic reaction, a sulfide is transferred from Cys-219 to a reaction intermediate, generating a dehydroalanine residue.

The protein resides in the plastid. It localises to the chloroplast. The catalysed reaction is [ADP-thiazole synthase]-L-cysteine + glycine + NAD(+) = [ADP-thiazole synthase]-dehydroalanine + ADP-5-ethyl-4-methylthiazole-2-carboxylate + nicotinamide + 3 H2O + 2 H(+). Involved in biosynthesis of the thiamine precursor thiazole. Catalyzes the conversion of NAD and glycine to adenosine diphosphate 5-(2-hydroxyethyl)-4-methylthiazole-2-carboxylic acid (ADT), an adenylated thiazole intermediate. The reaction includes an iron-dependent sulfide transfer from a conserved cysteine residue of the protein to a thiazole intermediate. The enzyme can only undergo a single turnover, which suggests it is a suicide enzyme. May have additional roles in adaptation to various stress conditions and in DNA damage tolerance. In Sorghum bicolor (Sorghum), this protein is Thiamine thiazole synthase 1, chloroplastic.